Consider the following 442-residue polypeptide: GDP-L-galactose phosphorylase 1 (442 aa).

Catalysis depends on histidine 238, which acts as the Tele-GMP-histidine intermediate.

The protein belongs to the GDPGP1 family. As to quaternary structure, interacts with TLP1. As to expression, expressed in leaves, stems, roots, flowers and siliques. Highest expression in green tissues.

The protein localises to the cytoplasm. It localises to the nucleus. It carries out the reaction GDP-beta-L-galactose + phosphate = beta-L-galactose 1-phosphate + GDP + H(+). The protein operates within cofactor biosynthesis; L-ascorbate biosynthesis via GDP-alpha-D-mannose pathway; L-ascorbate from GDP-alpha-D-mannose: step 2/5. With respect to regulation, not inhibited by dithiothreitol, N-ethylmaleimide, phenylmethane sulfonyl fluoride, ascorbate, L-galactose and L-galactonolactone. In terms of biological role, catalyzes a reaction of the Smirnoff-Wheeler pathway, the major route to ascorbate biosynthesis in plants. Acts as a phosphorylase rather than as a transferase. Uses preferentially GDP-L-galactose and GDP-D-glucose as substrates. Lower activity with GDP-L-fucose, very low activity with GDP-D-mannose, and no activity with UDP-D-glucose, UDP-D-galactose or ADP-D-glucose. Highly specific for inorganic phosphate as the guanylyl acceptor. The polypeptide is GDP-L-galactose phosphorylase 1 (VTC2) (Arabidopsis thaliana (Mouse-ear cress)).